The chain runs to 316 residues: ATP synthase gamma chain (316 aa).

Belongs to the ATPase gamma chain family. In terms of assembly, F-type ATPases have 2 components, CF(1) - the catalytic core - and CF(0) - the membrane proton channel. CF(1) has five subunits: alpha(3), beta(3), gamma(1), delta(1), epsilon(1). CF(0) has three main subunits: a, b and c.

Its subcellular location is the cellular thylakoid membrane. Its function is as follows. Produces ATP from ADP in the presence of a proton gradient across the membrane. The gamma chain is believed to be important in regulating ATPase activity and the flow of protons through the CF(0) complex. The polypeptide is ATP synthase gamma chain (Prochlorococcus marinus (strain MIT 9312)).